We begin with the raw amino-acid sequence, 301 residues long: MENLLSVKDLSKQQILDLLALAKAVKANPAEYSQALAGKSIVTIYEKPSLRTRVTFDIGIHKLGGHAVYLDAQNGAIGERETVKDFAANISRWADAIVARVVSHKTLEGLVEHGSVPVVNSLCDLYHPCQALADFLTISEHYEDVSKVKLAYVGEGNNVTHSLMLTGAILGAEVTAVCPRGSSPDAQIVKQAMALAEISGGKINVTDNLDDIVDYDVIYGDTWVSMGDDTPLAQVKEKYMPYQINKALLMRTGIKHVLHCQPAHRELEITSEVMDGEHSLIFDQAENRMHAQNAVLLTLLK.

Carbamoyl phosphate is bound by residues arginine 100 and 127–130 (HPCQ). Residues asparagine 158, aspartate 221, and 225 to 226 (SM) contribute to the L-ornithine site. Cysteine 260 and arginine 288 together coordinate carbamoyl phosphate.

The protein belongs to the aspartate/ornithine carbamoyltransferase superfamily. OTCase family. The enzyme is present as a mixture of trimers and dodecamers, with the relative proportions of the two forms depending on the salt concentration. In addition, the trimeric fraction could reassociate into dodecamers when the salt concentration is increased. It appears that in vivo, the main fraction is in the dodecameric form.

The protein localises to the cytoplasm. It catalyses the reaction carbamoyl phosphate + L-ornithine = L-citrulline + phosphate + H(+). The protein operates within amino-acid biosynthesis; L-arginine biosynthesis; L-arginine from L-ornithine and carbamoyl phosphate: step 1/3. Its activity is regulated as follows. Inhibited by excess of arginine and by the bisubstrate delta-N-phosphonoacetyl-L-ornithine (PALO). In terms of biological role, reversibly catalyzes the transfer of the carbamoyl group from carbamoyl phosphate (CP) to the N(epsilon) atom of ornithine (ORN) to produce L-citrulline, which is a substrate for argininosuccinate synthetase, the enzyme involved in the final step in arginine biosynthesis. This chain is Ornithine carbamoyltransferase, found in Moritella abyssi.